A 62-amino-acid chain; its full sequence is Conotoxin Sr5.6 (62 aa).

The N-terminal stretch at 1-22 (MRCLPVFVILLLLIASASSVDA) is a signal peptide. Positions 23–44 (QLKTKDDVPLTSVHDNAKGTQH) are excised as a propeptide. Residue Pro-61 is modified to Proline amide.

This sequence belongs to the conotoxin T superfamily. Post-translationally, contains 2 disulfide bonds that can be either 'C1-C3, C2-C4' or 'C1-C4, C2-C3', since these disulfide connectivities have been observed for conotoxins with cysteine framework V (for examples, see AC P0DQQ7 and AC P81755). As to expression, expressed by the venom duct.

The protein localises to the secreted. This Conus spurius (Alphabet cone) protein is Conotoxin Sr5.6.